A 123-amino-acid polypeptide reads, in one-letter code: uncharacterized protein (123 aa).

This is an uncharacterized protein from Homo sapiens (Human).